The following is a 175-amino-acid chain: UPF0398 protein SGO_0588 (175 aa).

Belongs to the UPF0398 family.

The protein is UPF0398 protein SGO_0588 of Streptococcus gordonii (strain Challis / ATCC 35105 / BCRC 15272 / CH1 / DL1 / V288).